A 240-amino-acid chain; its full sequence is Transcription factor bHLH47 (240 aa).

Polar residues predominate over residues 1 to 13 (MVSKTPSTSSDEA). A disordered region spans residues 1 to 26 (MVSKTPSTSSDEANATADERCRKGKV). The 51-residue stretch at 27–77 (PKRINKAVRERLKREHLNELFIELADTLELNQQNSGKASILCEATRFLKDV) folds into the bHLH domain. Positions 98 to 131 (VTTEKNELKEETSVLETEISKLQNEIEARANQSK) form a coiled coil. The segment covering 128–138 (NQSKPDLNTSP) has biased composition (polar residues). The disordered stretch occupies residues 128–153 (NQSKPDLNTSPAPEYHHHHYQQQHPE).

In terms of assembly, homodimer. Forms heterodimer with PYEL proteins bHLH115, bHLH104 and ILR3. Expressed constitutively in roots, leaves, stems, and flowers.

It localises to the nucleus. In Arabidopsis thaliana (Mouse-ear cress), this protein is Transcription factor bHLH47 (BHLH47).